The primary structure comprises 397 residues: uncharacterized protein (397 aa).

Phosphoserine occurs at positions 115 and 141. The segment at 135–156 (NSLNHDSPPHTPARRSDNSTSK) is disordered. A Glycyl lysine isopeptide (Lys-Gly) (interchain with G-Cter in SUMO2) cross-link involves residue lysine 239. Phosphoserine is present on residues serine 269 and serine 296. Residues 289–316 (GRGPTKASPQPALTVKAKATSSATTLAS) form a disordered region. Residues 300–316 (ALTVKAKATSSATTLAS) are compositionally biased toward low complexity. Serine 342 is subject to Phosphoserine. The tract at residues 354–397 (SEAQDSQVTSTKSPTVRCIVPDPPAPLASQRPPRRRWRRTCKDC) is disordered. Over residues 356 to 367 (AQDSQVTSTKSP) the composition is skewed to polar residues. A compositionally biased stretch (basic residues) spans 385-397 (PPRRRWRRTCKDC).

This is an uncharacterized protein from Rattus norvegicus (Rat).